We begin with the raw amino-acid sequence, 528 residues long: GMP synthase [glutamine-hydrolyzing] (528 aa).

Positions 13 to 204 (AIVILDFGSQ…VYDICSCEPD (192 aa)) constitute a Glutamine amidotransferase type-1 domain. The Nucleophile role is filled by C90. Residues H178 and E180 contribute to the active site. The GMPS ATP-PPase domain maps to 205–403 (WTTNLFIDEA…LGLPDEIVRR (199 aa)). 232-238 (SGGVDSS) serves as a coordination point for ATP.

In terms of assembly, homodimer.

It carries out the reaction XMP + L-glutamine + ATP + H2O = GMP + L-glutamate + AMP + diphosphate + 2 H(+). It participates in purine metabolism; GMP biosynthesis; GMP from XMP (L-Gln route): step 1/1. In terms of biological role, catalyzes the synthesis of GMP from XMP. This is GMP synthase [glutamine-hydrolyzing] from Prochlorococcus marinus (strain NATL2A).